The following is a 248-amino-acid chain: Type II restriction enzyme XhoI (248 aa).

The protein belongs to the XhoI type II restriction endonuclease family.

The enzyme catalyses Endonucleolytic cleavage of DNA to give specific double-stranded fragments with terminal 5'-phosphates.. A P subtype restriction enzyme that recognizes the double-stranded sequence 5'-CTCGAG-3' and cleaves after C-1. The chain is Type II restriction enzyme XhoI from Xanthomonas vasicola.